The following is a 2571-amino-acid chain: Stabilin-1 (2571 aa).

Residues 1–25 (MAEPRTLLLLCVLVLCLSDSSFIRG) form the signal peptide. At 26 to 2475 (QTVRSKRCDI…RAVLGSEPPP (2450 aa)) the chain is on the extracellular side. 4 EGF-like domains span residues 111-149 (FECP…SVCQ), 157-194 (FGPD…PHCD), 196-232 (ELPV…NVCL), and 233-272 (APDP…KVCL). Disulfide bonds link cysteine 113–cysteine 127, cysteine 121–cysteine 137, cysteine 139–cysteine 148, cysteine 161–cysteine 172, cysteine 165–cysteine 182, cysteine 184–cysteine 193, cysteine 200–cysteine 211, cysteine 205–cysteine 218, cysteine 220–cysteine 231, cysteine 237–cysteine 248, cysteine 242–cysteine 258, and cysteine 260–cysteine 271. Asparagine 134 and asparagine 142 each carry an N-linked (GlcNAc...) asparagine glycan. Residues asparagine 287, asparagine 313, asparagine 416, asparagine 607, asparagine 674, asparagine 713, and asparagine 746 are each glycosylated (N-linked (GlcNAc...) asparagine). FAS1 domains lie at 357 to 495 (YGHL…TALR) and 507 to 642 (KKTV…EGIL). The region spanning 729–769 (DCTQCPGGFSNPCYGKGNCSDGVRGNGACLCFPDYKGIACH) is the EGF-like 5 domain. 3 disulfide bridges follow: cysteine 733/cysteine 747, cysteine 741/cysteine 757, and cysteine 759/cysteine 768. An N-linked (GlcNAc...) asparagine glycan is attached at asparagine 817. EGF-like domains are found at residues 819–859 (SMGN…NGFS), 862–904 (RSNP…RICV), 905–947 (AIDE…YECS), and 948–987 (PIDP…DGFS). Intrachain disulfides connect cysteine 823–cysteine 838, cysteine 832–cysteine 847, cysteine 866–cysteine 880, cysteine 874–cysteine 890, cysteine 892–cysteine 903, cysteine 909–cysteine 923, cysteine 917–cysteine 933, cysteine 935–cysteine 946, cysteine 952–cysteine 965, and cysteine 959–cysteine 975. FAS1 domains follow at residues 989 to 1119 (YGDI…SQVL) and 1129 to 1254 (GPGL…SGIL). N-linked (GlcNAc...) asparagine glycosylation is found at asparagine 1011, asparagine 1088, asparagine 1097, asparagine 1171, asparagine 1179, asparagine 1223, and asparagine 1275. The Laminin EGF-like 1 domain maps to 1328–1393 (TLCEPCPGGL…CDCDHGLCQE (66 aa)). Disulfide bonds link cysteine 1333-cysteine 1347, cysteine 1341-cysteine 1357, cysteine 1359-cysteine 1368, cysteine 1380-cysteine 1391, cysteine 1384-cysteine 1401, cysteine 1403-cysteine 1412, cysteine 1421-cysteine 1431, cysteine 1425-cysteine 1441, cysteine 1443-cysteine 1454, cysteine 1460-cysteine 1473, cysteine 1467-cysteine 1483, cysteine 1485-cysteine 1496, cysteine 1502-cysteine 1515, cysteine 1509-cysteine 1525, cysteine 1527-cysteine 1539, cysteine 1545-cysteine 1558, cysteine 1552-cysteine 1568, and cysteine 1570-cysteine 1582. The N-linked (GlcNAc...) asparagine glycan is linked to asparagine 1398. EGF-like domains lie at 1417-1455 (TDHQ…SYCS), 1456-1497 (EVDP…ELCQ), 1498-1540 (EINS…QTCK), and 1541-1583 (LLDP…ITCH). Residues asparagine 1450 and asparagine 1472 are each glycosylated (N-linked (GlcNAc...) asparagine). FAS1 domains lie at 1583–1709 (HGRV…DHVL) and 1725–1865 (PQRN…DQLL). Residues asparagine 1627 and asparagine 1728 are each glycosylated (N-linked (GlcNAc...) asparagine). The Laminin EGF-like 2 domain maps to 1966–2031 (INCHACPGGP…RCTQHGRCDE (66 aa)). Disulfide bonds link cysteine 1971/cysteine 1985, cysteine 1979/cysteine 1995, cysteine 1997/cysteine 2006, cysteine 2018/cysteine 2029, cysteine 2023/cysteine 2039, cysteine 2041/cysteine 2050, cysteine 2060/cysteine 2070, cysteine 2064/cysteine 2076, cysteine 2078/cysteine 2089, cysteine 2095/cysteine 2108, cysteine 2102/cysteine 2117, cysteine 2119/cysteine 2130, cysteine 2136/cysteine 2150, cysteine 2144/cysteine 2160, cysteine 2162/cysteine 2173, cysteine 2230/cysteine 2299, and cysteine 2254/cysteine 2275. 3 consecutive EGF-like domains span residues 2056–2090 (LQPV…RVCT), 2091–2131 (VADL…WSCR), and 2132–2174 (ARDP…LQCL). Asparagine 2107 is a glycosylation site (N-linked (GlcNAc...) asparagine). Residues 2208-2301 (GVFHIQATSG…SELWDAYCYR (94 aa)) enclose the Link domain. N-linked (GlcNAc...) asparagine glycans are attached at residues asparagine 2261, asparagine 2290, asparagine 2334, asparagine 2347, asparagine 2379, asparagine 2393, asparagine 2400, and asparagine 2424. The FAS1 7 domain occupies 2322 to 2459 (NGKLLDVLAA…GIIHALASPL (138 aa)). The helical transmembrane segment at 2476–2496 (VALSLGVVVTSGTLLGLVAGA) threads the bilayer. Residues 2497–2571 (LYLRARGKPP…PDTQRVLKVK (75 aa)) are Cytoplasmic-facing.

As to quaternary structure, interacts with CHID1.

The protein localises to the membrane. In terms of biological role, acts as a scavenger receptor for acetylated low density lipoprotein. Binds to both Gram-positive and Gram-negative bacteria and may play a role in defense against bacterial infection. When inhibited in endothelial tube formation assays, there is a marked decrease in cell-cell interactions, suggesting a role in angiogenesis. Involved in the delivery of newly synthesized CHID1/SI-CLP from the biosynthetic compartment to the endosomal/lysosomal system. The sequence is that of Stabilin-1 (Stab1) from Mus musculus (Mouse).